Consider the following 380-residue polypeptide: Anhydro-N-acetylmuramic acid kinase (380 aa).

9 to 16 (GTSVDGID) is a binding site for ATP.

It belongs to the anhydro-N-acetylmuramic acid kinase family.

It catalyses the reaction 1,6-anhydro-N-acetyl-beta-muramate + ATP + H2O = N-acetyl-D-muramate 6-phosphate + ADP + H(+). It participates in amino-sugar metabolism; 1,6-anhydro-N-acetylmuramate degradation. Its pathway is cell wall biogenesis; peptidoglycan recycling. In terms of biological role, catalyzes the specific phosphorylation of 1,6-anhydro-N-acetylmuramic acid (anhMurNAc) with the simultaneous cleavage of the 1,6-anhydro ring, generating MurNAc-6-P. Is required for the utilization of anhMurNAc either imported from the medium or derived from its own cell wall murein, and thus plays a role in cell wall recycling. In Cyanothece sp. (strain PCC 7425 / ATCC 29141), this protein is Anhydro-N-acetylmuramic acid kinase.